The following is a 337-amino-acid chain: Protein ABHD13 (337 aa).

Residues phenylalanine 37–leucine 57 form a helical; Signal-anchor for type II membrane protein membrane-spanning segment. Active-site charge relay system residues include serine 193, aspartate 268, and histidine 298. Asparagine 299 carries N-linked (GlcNAc...) asparagine glycosylation.

This sequence belongs to the serine esterase family.

It is found in the membrane. This chain is Protein ABHD13, found in Mus musculus (Mouse).